The following is a 313-amino-acid chain: Dimethyladenosine transferase (313 aa).

S-adenosyl-L-methionine is bound by residues His-37, Leu-39, Gly-64, Glu-85, Asp-113, and Asn-128.

Belongs to the class I-like SAM-binding methyltransferase superfamily. rRNA adenine N(6)-methyltransferase family. In terms of assembly, part of the small subunit (SSU) processome, composed of more than 70 proteins and the RNA chaperone small nucleolar RNA (snoRNA) U3.

Its subcellular location is the nucleus. It is found in the nucleoplasm. The protein resides in the nucleolus. The catalysed reaction is adenosine(1779)/adenosine(1780) in 18S rRNA + 4 S-adenosyl-L-methionine = N(6)-dimethyladenosine(1779)/N(6)-dimethyladenosine(1780) in 18S rRNA + 4 S-adenosyl-L-homocysteine + 4 H(+). Specifically dimethylates two adjacent adenosines in the loop of a conserved hairpin near the 3'-end of 18S rRNA in the 40S particle. Involved in the pre-rRNA processing steps leading to small-subunit rRNA production independently of its RNA-modifying catalytic activity. Part of the small subunit (SSU) processome, first precursor of the small eukaryotic ribosomal subunit. During the assembly of the SSU processome in the nucleolus, many ribosome biogenesis factors, an RNA chaperone and ribosomal proteins associate with the nascent pre-rRNA and work in concert to generate RNA folding, modifications, rearrangements and cleavage as well as targeted degradation of pre-ribosomal RNA by the RNA exosome. This chain is Dimethyladenosine transferase (Dimt1), found in Mus musculus (Mouse).